Reading from the N-terminus, the 119-residue chain is Holo-[acyl-carrier-protein] synthase (119 aa).

Mg(2+) contacts are provided by D8 and E58.

Belongs to the P-Pant transferase superfamily. AcpS family. The cofactor is Mg(2+).

Its subcellular location is the cytoplasm. The catalysed reaction is apo-[ACP] + CoA = holo-[ACP] + adenosine 3',5'-bisphosphate + H(+). In terms of biological role, transfers the 4'-phosphopantetheine moiety from coenzyme A to a Ser of acyl-carrier-protein. The protein is Holo-[acyl-carrier-protein] synthase of Streptococcus thermophilus (strain ATCC BAA-491 / LMD-9).